The chain runs to 414 residues: Methanesulfonate monooxygenase hydroxylase subunit alpha (414 aa).

The 120-residue stretch at Trp44–Trp163 folds into the Rieske domain. Cys86, His88, Cys115, and His118 together coordinate [2Fe-2S] cluster. Position 225 (His225) interacts with Fe cation.

It belongs to the bacterial ring-hydroxylating dioxygenase alpha subunit family. In terms of assembly, the MSA monooxygenase system consists of 4 proteins: the 2 subunits of the hydroxylase component (MsmA and MsmB), a ferredoxin (MsmC) and a ferredoxin reductase (MsmD). The hydroxylase component consists of a 3 alpha (MsmA) and 3 beta (MsmB) subunits. The cofactor is [2Fe-2S] cluster. Fe cation is required as a cofactor.

The protein resides in the cytoplasm. The enzyme catalyses methanesulfonate + NADH + O2 = sulfite + formaldehyde + NAD(+) + H2O. With respect to regulation, MSAMO is inhibited by metal chelators (such as bathophenanthroline, bathocuprione, neocuprione, alpha-alpha-dipyridil and sodium EDTA) and by sodium azide, sodium arsenate and potassium cyanide. Its function is as follows. Methanesulfonate monooxygenase (MSAMO) mediates the primary degradation of methanesulfonic acid (MSA) to produce formaldehyd and inorganic sulfite by initial hydroxylation of the carbon atom prior to spontaneous cleavage of the unstable hydroxymethanesulfonic acid. MSAMO has a restricted substrate range that includes only the short-chain aliphatic sulfonates (methane- to butanesulfonate) and excludes all larger molecules, such as arylsulfonates and aromatic sulfonates. All MSAMO components are required for enzyme activity. The polypeptide is Methanesulfonate monooxygenase hydroxylase subunit alpha (Methylosulfonomonas methylovora).